A 406-amino-acid chain; its full sequence is Succinylornithine transaminase (406 aa).

The residue at position 252 (K252) is an N6-(pyridoxal phosphate)lysine.

It belongs to the class-III pyridoxal-phosphate-dependent aminotransferase family. AstC subfamily. The cofactor is pyridoxal 5'-phosphate.

The catalysed reaction is N(2)-succinyl-L-ornithine + 2-oxoglutarate = N-succinyl-L-glutamate 5-semialdehyde + L-glutamate. Its pathway is amino-acid degradation; L-arginine degradation via AST pathway; L-glutamate and succinate from L-arginine: step 3/5. Its function is as follows. Catalyzes the transamination of N(2)-succinylornithine and alpha-ketoglutarate into N(2)-succinylglutamate semialdehyde and glutamate. Can also act as an acetylornithine aminotransferase. This is Succinylornithine transaminase from Shigella sonnei (strain Ss046).